A 284-amino-acid chain; its full sequence is Ribosomal RNA small subunit methyltransferase A (284 aa).

The S-adenosyl-L-methionine site is built by N26, L28, G53, E74, D97, and N127.

Belongs to the class I-like SAM-binding methyltransferase superfamily. rRNA adenine N(6)-methyltransferase family. RsmA subfamily.

Its subcellular location is the cytoplasm. It carries out the reaction adenosine(1518)/adenosine(1519) in 16S rRNA + 4 S-adenosyl-L-methionine = N(6)-dimethyladenosine(1518)/N(6)-dimethyladenosine(1519) in 16S rRNA + 4 S-adenosyl-L-homocysteine + 4 H(+). Its function is as follows. Specifically dimethylates two adjacent adenosines (A1518 and A1519) in the loop of a conserved hairpin near the 3'-end of 16S rRNA in the 30S particle. May play a critical role in biogenesis of 30S subunits. The protein is Ribosomal RNA small subunit methyltransferase A of Anaeromyxobacter dehalogenans (strain 2CP-1 / ATCC BAA-258).